Consider the following 424-residue polypeptide: MTVSHPAHRVAMLCVHTSPLAQPGTGDAGGMNVYVVELARAMAAQGTEVEIFTRRTTANQPDVVEVDDGVLVRHVTAGPYEGLDKNDLPGQLCYFTQGVLRTEAARQPGWYDIVHSHYWLSGQAGWLAADRWNVPLVHTMHTMARVKNAQLAPGDAPEPRARIIGEEQVVEQSAALVANTDKEAHELHTLYAADPEKVHVVAPGVDLAAFTPPIDDHQRQAERVALGLAPEGDVIVFAGRIQPLKGPDVLVDALALLRSQQPDRPMPTLVIIGGPSGRPAALGELRARVFQRGVAQHVRFVPPADRPTLAQWMRVADYVAMPSRNESFGLVAIEAQACGTPVIAADVGGLTTAVAHKKSGLLVPDHRPQTWAGVLQVALGDTQLRESLRAGARRHAQQFTWDHTATDMLAVYERTRVAASVNTG.

His-16 lines the 1D-myo-inositol 3-phosphate pocket. UDP-N-acetyl-alpha-D-glucosamine is bound by residues 22 to 23 and Gly-30; that span reads QP. Residues 27 to 32, Lys-85, Tyr-118, Thr-142, and Arg-162 contribute to the 1D-myo-inositol 3-phosphate site; that span reads DAGGMN. Positions 240 and 245 each coordinate UDP-N-acetyl-alpha-D-glucosamine. Residues Met-313, Arg-314, and Ala-316 each coordinate Mg(2+). The UDP-N-acetyl-alpha-D-glucosamine site is built by Glu-326 and Glu-334. Thr-340 lines the Mg(2+) pocket.

It belongs to the glycosyltransferase group 1 family. MshA subfamily. As to quaternary structure, homodimer.

The catalysed reaction is 1D-myo-inositol 3-phosphate + UDP-N-acetyl-alpha-D-glucosamine = 1D-myo-inositol 2-acetamido-2-deoxy-alpha-D-glucopyranoside 3-phosphate + UDP + H(+). Catalyzes the transfer of a N-acetyl-glucosamine moiety to 1D-myo-inositol 3-phosphate to produce 1D-myo-inositol 2-acetamido-2-deoxy-glucopyranoside 3-phosphate in the mycothiol biosynthesis pathway. This Jonesia denitrificans (strain ATCC 14870 / DSM 20603 / BCRC 15368 / CIP 55.134 / JCM 11481 / NBRC 15587 / NCTC 10816 / Prevot 55134) (Listeria denitrificans) protein is D-inositol 3-phosphate glycosyltransferase.